The sequence spans 165 residues: MPLNREDKQAVVAEVAAQVAKAQTVVLAEYRGIAVGDLTTLRAKAREQKVYLRVLKNTLARRAVEGTPFAPLAEQMTGPLIYGISEDAIAAAKVVNDFSKSNDKLVIKAGSYDGKVMDKAGVQALASIPSREELLSKLLFVMQAPVSGFARALAALAEKKQAEAA.

The protein belongs to the universal ribosomal protein uL10 family. As to quaternary structure, part of the ribosomal stalk of the 50S ribosomal subunit. The N-terminus interacts with L11 and the large rRNA to form the base of the stalk. The C-terminus forms an elongated spine to which L12 dimers bind in a sequential fashion forming a multimeric L10(L12)X complex.

Forms part of the ribosomal stalk, playing a central role in the interaction of the ribosome with GTP-bound translation factors. The protein is Large ribosomal subunit protein uL10 of Burkholderia thailandensis (strain ATCC 700388 / DSM 13276 / CCUG 48851 / CIP 106301 / E264).